The following is a 124-amino-acid chain: Small ribosomal subunit protein uS12 (124 aa).

3-methylthioaspartic acid is present on aspartate 89. Residues 104 to 124 form a disordered region; it reads SAGVQNRNRGRSKYGTKRPKK. The span at 111–124 shows a compositional bias: basic residues; the sequence is NRGRSKYGTKRPKK.

Belongs to the universal ribosomal protein uS12 family. Part of the 30S ribosomal subunit. Contacts proteins S8 and S17. May interact with IF1 in the 30S initiation complex.

With S4 and S5 plays an important role in translational accuracy. Its function is as follows. Interacts with and stabilizes bases of the 16S rRNA that are involved in tRNA selection in the A site and with the mRNA backbone. Located at the interface of the 30S and 50S subunits, it traverses the body of the 30S subunit contacting proteins on the other side and probably holding the rRNA structure together. The combined cluster of proteins S8, S12 and S17 appears to hold together the shoulder and platform of the 30S subunit. The sequence is that of Small ribosomal subunit protein uS12 from Desulforamulus reducens (strain ATCC BAA-1160 / DSM 100696 / MI-1) (Desulfotomaculum reducens).